We begin with the raw amino-acid sequence, 68 residues long: Purkinje cell protein 4-like protein 1 (68 aa).

Residues 1-16 show a composition bias toward polar residues; the sequence is MSELNTKTSPATNQAA. Residues 1–45 are disordered; it reads MSELNTKTSPATNQAAGQEEKGKAGNVKKAEEEEEIDIDLTAPET. Phosphothreonine is present on Thr-8. Residues 18-31 show a composition bias toward basic and acidic residues; the sequence is QEEKGKAGNVKKAE. The IQ domain maps to 45-68; it reads TEKAALAIQGKFRRFQKRKKDPSS.

This sequence belongs to the PCP4 family.

This Homo sapiens (Human) protein is Purkinje cell protein 4-like protein 1 (PCP4L1).